Consider the following 145-residue polypeptide: Immunoglobulin iota chain (145 aa).

An N-terminal signal peptide occupies residues M1–P19. The framework-1 stretch occupies residues Q20–C41. In terms of domain architecture, Ig-like V-type spans Q20–E132. C41 and C115 are oxidised to a cystine. The interval T42–W56 is complementarity-determining-1. The segment at Y57 to R70 is framework-2. The tract at residues Y71–P81 is complementarity-determining-2. Positions Q82 to C115 are framework-3. The span at S121 to E130 shows a compositional bias: basic and acidic residues. The interval S121 to P145 is disordered.

It belongs to the immunoglobulin superfamily. In terms of assembly, interacts with IGLL1. Interacts with SYNV1/HRD1 (via N-terminus); this interaction leads to increased VPREB1 ubiquitination and degradation in pre-B cells, possibly through a lysosomal, not proteasomal, pathway. In terms of tissue distribution, only expressed by pre-B-cells.

The protein localises to the endoplasmic reticulum. Its function is as follows. Associates with the Ig-mu chain to form a molecular complex that is expressed on the surface of pre-B-cells. This complex presumably regulates Ig gene rearrangements in the early steps of B-cell differentiation. This chain is Immunoglobulin iota chain (VPREB1), found in Homo sapiens (Human).